A 330-amino-acid chain; its full sequence is Ferredoxin--NADP reductase (330 aa).

E35, Q43, Y48, V90, F123, D285, and T326 together coordinate FAD.

It belongs to the ferredoxin--NADP reductase type 2 family. As to quaternary structure, homodimer. It depends on FAD as a cofactor.

The enzyme catalyses 2 reduced [2Fe-2S]-[ferredoxin] + NADP(+) + H(+) = 2 oxidized [2Fe-2S]-[ferredoxin] + NADPH. The chain is Ferredoxin--NADP reductase from Streptococcus pyogenes serotype M1.